The primary structure comprises 344 residues: tRNA N6-adenosine threonylcarbamoyltransferase (344 aa).

Residues histidine 110 and histidine 114 each coordinate Fe cation. Substrate is bound by residues 133–137, aspartate 166, glycine 179, and asparagine 278; that span reads VVSGA. Aspartate 303 is a Fe cation binding site.

It belongs to the KAE1 / TsaD family. Fe(2+) serves as cofactor.

The protein resides in the cytoplasm. The enzyme catalyses L-threonylcarbamoyladenylate + adenosine(37) in tRNA = N(6)-L-threonylcarbamoyladenosine(37) in tRNA + AMP + H(+). Functionally, required for the formation of a threonylcarbamoyl group on adenosine at position 37 (t(6)A37) in tRNAs that read codons beginning with adenine. Is involved in the transfer of the threonylcarbamoyl moiety of threonylcarbamoyl-AMP (TC-AMP) to the N6 group of A37, together with TsaE and TsaB. TsaD likely plays a direct catalytic role in this reaction. The polypeptide is tRNA N6-adenosine threonylcarbamoyltransferase (Chlamydia pneumoniae (Chlamydophila pneumoniae)).